The following is a 330-amino-acid chain: Solute carrier family 25 member 16 (330 aa).

Solcar repeat units follow at residues 32-118 (FYWL…YKTL), 126-214 (SGHV…LKSV), and 236-326 (LKTH…MKQF). Helical transmembrane passes span 33-52 (YWLR…KTTV), 95-112 (GAMM…FMAF), 132-149 (LMAG…TYPL), 189-209 (GLMP…FTFG), 242-262 (LLCG…FDVT), and 297-317 (GLYR…AVAF).

The protein belongs to the mitochondrial carrier (TC 2.A.29) family. In terms of tissue distribution, mostly in thyroid, liver, lung, kidney and to a lesser extent in heart and skeletal muscle.

The protein resides in the mitochondrion inner membrane. Its function is as follows. May be involved in the transport of coenzyme A in the mitochondrial matrix. Very little is known about the physiological function of this carrier. This chain is Solute carrier family 25 member 16 (SLC25A16), found in Bos taurus (Bovine).